A 270-amino-acid polypeptide reads, in one-letter code: Probable 6-oxopurine nucleoside phosphorylase (270 aa).

Phosphate-binding positions include Ser-10 and 48-49 (RH). Substrate is bound at residue Met-191. Thr-192 contributes to the phosphate binding site. Residue 215–217 (NYA) participates in substrate binding.

The protein belongs to the PNP/MTAP phosphorylase family. MTAP subfamily. Homohexamer. Dimer of a homotrimer.

The catalysed reaction is a purine D-ribonucleoside + phosphate = a purine nucleobase + alpha-D-ribose 1-phosphate. It participates in purine metabolism; purine nucleoside salvage. Functionally, purine nucleoside phosphorylase which is highly specific for 6-oxopurine nucleosides. Cleaves guanosine or inosine to respective bases and sugar-1-phosphate molecules. Involved in purine salvage. The sequence is that of Probable 6-oxopurine nucleoside phosphorylase from Korarchaeum cryptofilum (strain OPF8).